The following is a 115-amino-acid chain: Large ribosomal subunit protein bL19 (115 aa).

Belongs to the bacterial ribosomal protein bL19 family.

This protein is located at the 30S-50S ribosomal subunit interface and may play a role in the structure and function of the aminoacyl-tRNA binding site. This is Large ribosomal subunit protein bL19 from Nitratidesulfovibrio vulgaris (strain DSM 19637 / Miyazaki F) (Desulfovibrio vulgaris).